Consider the following 340-residue polypeptide: DNA-directed RNA polymerase subunit alpha (340 aa).

Residues 1 to 226 are alpha N-terminal domain (alpha-NTD); sequence MLIAQRPSLT…ELFGLARELN (226 aa). The alpha C-terminal domain (alpha-CTD) stretch occupies residues 243–340; sequence LAADLALPIE…DAGFVETEQY (98 aa).

It belongs to the RNA polymerase alpha chain family. In terms of assembly, homodimer. The RNAP catalytic core consists of 2 alpha, 1 beta, 1 beta' and 1 omega subunit. When a sigma factor is associated with the core the holoenzyme is formed, which can initiate transcription.

The enzyme catalyses RNA(n) + a ribonucleoside 5'-triphosphate = RNA(n+1) + diphosphate. Functionally, DNA-dependent RNA polymerase catalyzes the transcription of DNA into RNA using the four ribonucleoside triphosphates as substrates. The protein is DNA-directed RNA polymerase subunit alpha of Streptomyces avermitilis (strain ATCC 31267 / DSM 46492 / JCM 5070 / NBRC 14893 / NCIMB 12804 / NRRL 8165 / MA-4680).